Consider the following 698-residue polypeptide: Colicin V secretion/processing ATP-binding protein CvaB (698 aa).

The Peptidase C39 domain maps to Gln26 to Val145. Residue Cys32 is part of the active site. The next 7 membrane-spanning stretches (helical) occupy residues Gly33–Leu53, Val92–Val112, Leu176–Gly196, Gly211–Ser231, Thr289–Tyr311, Leu315–Tyr334, and Ile412–Phe432. The region spanning Leu176 to Ile458 is the ABC transmembrane type-1 domain. Residues Leu492–Ile698 enclose the ABC transporter domain. An ATP-binding site is contributed by Gly526–Thr533.

This sequence belongs to the ABC transporter superfamily. Colicin V exporter (TC 3.A.1.110.2) family.

It localises to the cell membrane. Its function is as follows. Involved, in conjunction with CvaA, in the secretion of colicin V. This is Colicin V secretion/processing ATP-binding protein CvaB (cvaB) from Escherichia coli.